A 249-amino-acid polypeptide reads, in one-letter code: Coproheme decarboxylase (249 aa).

The active site involves Tyr145. Fe-coproporphyrin III-binding positions include 145–149 (YPMAR) and His172.

Belongs to the ChdC family. Type 1 subfamily. The cofactor is Fe-coproporphyrin III.

It carries out the reaction Fe-coproporphyrin III + 2 H2O2 + 2 H(+) = heme b + 2 CO2 + 4 H2O. The enzyme catalyses Fe-coproporphyrin III + H2O2 + H(+) = harderoheme III + CO2 + 2 H2O. It catalyses the reaction harderoheme III + H2O2 + H(+) = heme b + CO2 + 2 H2O. It participates in porphyrin-containing compound metabolism; protoheme biosynthesis. Its function is as follows. Involved in coproporphyrin-dependent heme b biosynthesis. Catalyzes the decarboxylation of Fe-coproporphyrin III (coproheme) to heme b (protoheme IX), the last step of the pathway. The reaction occurs in a stepwise manner with a three-propionate intermediate. This is Coproheme decarboxylase from Oceanobacillus iheyensis (strain DSM 14371 / CIP 107618 / JCM 11309 / KCTC 3954 / HTE831).